A 657-amino-acid chain; its full sequence is Methylenetetrahydrofolate reductase 1 (657 aa).

The Proton donor/acceptor role is filled by glutamate 18. NAD(+)-binding positions include 18 to 23 and 49 to 50; these read EFFPPK and TW. Residues 49–50, histidine 78, and 108–110 each bind FAD; these read TW and RGD. Aspartate 110 is a substrate binding site. Serine 120 bears the Phosphoserine mark. Residues 129–130, tyrosine 152, aspartate 171, and lysine 178 contribute to the FAD site; that span reads YA. The substrate site is built by glutamine 189 and tyrosine 286. At serine 301 the chain carries Phosphoserine. The segment at 308 to 329 is disordered; that stretch reads VNESSEEEGEDETSGEIGSIEN. The segment covering 311–321 has biased composition (acidic residues); it reads SSEEEGEDETS. Phosphoserine is present on serine 358.

It belongs to the methylenetetrahydrofolate reductase family. Requires FAD as cofactor.

The catalysed reaction is (6S)-5-methyl-5,6,7,8-tetrahydrofolate + NADP(+) = (6R)-5,10-methylene-5,6,7,8-tetrahydrofolate + NADPH + H(+). It catalyses the reaction (6S)-5-methyl-5,6,7,8-tetrahydrofolate + NAD(+) = (6R)-5,10-methylene-5,6,7,8-tetrahydrofolate + NADH + H(+). The protein operates within one-carbon metabolism; tetrahydrofolate interconversion. The sequence is that of Methylenetetrahydrofolate reductase 1 (MET12) from Saccharomyces cerevisiae (strain ATCC 204508 / S288c) (Baker's yeast).